Reading from the N-terminus, the 120-residue chain is Large ribosomal subunit protein bL19 (120 aa).

The protein belongs to the bacterial ribosomal protein bL19 family.

Its function is as follows. This protein is located at the 30S-50S ribosomal subunit interface and may play a role in the structure and function of the aminoacyl-tRNA binding site. The chain is Large ribosomal subunit protein bL19 from Dichelobacter nodosus (strain VCS1703A).